Here is a 313-residue protein sequence, read N- to C-terminus: Proclavaminate amidinohydrolase (313 aa).

Mn(2+) contacts are provided by H121, D144, H146, D148, D235, and D237.

It belongs to the arginase family. As to quaternary structure, homohexamer. Mn(2+) is required as a cofactor.

The catalysed reaction is amidinoproclavaminate + H2O = proclavaminate + urea. It participates in antibiotic biosynthesis; clavulanate biosynthesis; clavulanate from D-glyceraldehyde 3-phosphate and L-arginine: step 4/8. In Streptomyces clavuligerus, this protein is Proclavaminate amidinohydrolase (pah).